Reading from the N-terminus, the 221-residue chain is Uracil-DNA glycosylase (221 aa).

Aspartate 63 functions as the Proton acceptor in the catalytic mechanism.

Belongs to the uracil-DNA glycosylase (UDG) superfamily. UNG family.

Its subcellular location is the cytoplasm. It catalyses the reaction Hydrolyzes single-stranded DNA or mismatched double-stranded DNA and polynucleotides, releasing free uracil.. Excises uracil residues from the DNA which can arise as a result of misincorporation of dUMP residues by DNA polymerase or due to deamination of cytosine. In Blochmanniella floridana, this protein is Uracil-DNA glycosylase.